The primary structure comprises 145 residues: Antimicrobial peptide NK-lysin (145 aa).

The N-terminal stretch at 1-22 is a signal peptide; sequence MTSRALLLLASALLGTPGLTFS. Residues 23 to 62 constitute a propeptide that is removed on maturation; that stretch reads GLNPESYDLATAHLSDGEQFCQGLTQEDLQGDLLTERERQ. Residues 62–142 enclose the Saposin B-type domain; that stretch reads QGIACWSCRK…VDIKLCKHKA (81 aa). 3 disulfide bridges follow: C66–C138, C69–C132, and C97–C107. The propeptide occupies 141–145; the sequence is KAGLI.

Its subcellular location is the secreted. May be an effector molecule of cytotoxic activity. Has antimicrobial activity. The chain is Antimicrobial peptide NK-lysin (NKL) from Equus caballus (Horse).